The sequence spans 106 residues: Pyrimidine/purine nucleoside phosphorylase (106 aa).

Belongs to the nucleoside phosphorylase PpnP family.

The enzyme catalyses a purine D-ribonucleoside + phosphate = a purine nucleobase + alpha-D-ribose 1-phosphate. The catalysed reaction is adenosine + phosphate = alpha-D-ribose 1-phosphate + adenine. It catalyses the reaction cytidine + phosphate = cytosine + alpha-D-ribose 1-phosphate. It carries out the reaction guanosine + phosphate = alpha-D-ribose 1-phosphate + guanine. The enzyme catalyses inosine + phosphate = alpha-D-ribose 1-phosphate + hypoxanthine. The catalysed reaction is thymidine + phosphate = 2-deoxy-alpha-D-ribose 1-phosphate + thymine. It catalyses the reaction uridine + phosphate = alpha-D-ribose 1-phosphate + uracil. It carries out the reaction xanthosine + phosphate = alpha-D-ribose 1-phosphate + xanthine. In terms of biological role, catalyzes the phosphorolysis of diverse nucleosides, yielding D-ribose 1-phosphate and the respective free bases. Can use uridine, adenosine, guanosine, cytidine, thymidine, inosine and xanthosine as substrates. Also catalyzes the reverse reactions. The polypeptide is Pyrimidine/purine nucleoside phosphorylase (Burkholderia vietnamiensis (strain G4 / LMG 22486) (Burkholderia cepacia (strain R1808))).